The sequence spans 1452 residues: MEGGEELFRVSSARLSSSNVWRNSAMDVFSRSSREADDEEALKWAALEKLPTYLRIRRGILTEEEGQSREVDITKLDLVERRNLLERLIKITDEDNEKFLLKLKERIDRVGLDLPTIEVRFEHLSVDAEARVGSRALPTVFNFTVNILEDFLNYLHILPNRKQPLPILHDVSGIIKPGRMTLLLGPPSSGKTTLLLALAGKLDKDLKVSGRVTYNGHDMNEFVAQRSSAYISQYDLHIGEMTVRETLAFSARCQGVGAKYEILAELSRREKEANIKPDPDVDIFMKAAWNEGQEANVVTDYTLKILGLEICADTIVGDEMVRGISGGQRKRLTTGEMMVGPARALFMDEISTGLDSSTTYQIVNSIRQSIHILQGTAVISLLQPAPETYDLFDDIILLSDGQIVYQGPRENVLEFFEYMGFICPERKGVADFLQEVTSRKDQEQYWARREESYKFITVREFSEAFQAFHIGRKLGDELAVPFDKSKSHPAALTTKRYGVSKKELLKACTAREYLLMKRNSFVYIFKMIQLTLMASITMTLFLPTEMHRNTTIDGAVFLGALFYALIMIMFNGFSELALSIMKLPSFYKHRDLLFFPPWAYALPTWILKIPITLVEVAIWVCMTYYVIGFEADVGRFFKQLLLLICVNQMASGLFRLMGALGRNIIVANTFGSFVLLTVLVMGGFVLSRDDVKKWWIWGYWISPMMYAQNAIAVNEFLGKSWAHVPPNSTSTETLGVSFLKSRGIFPDARWYWIGAGALIGYVFLFNFLFAVALAYLNPFGKPQAVLSEETVAERNASKRGEVIELSSLGKSSSEKGNDVRRSASSRSMSSRVGSITAADLSKRRGMILPFEPLSITFDDIRYAVDMPQEMKAQGFTEDRLELLRGVSGAFRPGVLTALMGVSGAGKTTLMDVLAGRKTGGYIDGTISISGYPKQQETFARIAGYCEQTDIHSPHVTVYESLQFSAWLRLPREVDTATRKMFIEEVMELIELIPLRDALVGLPGVNGLSTEQRKRLTVAVELVANPSIIFMDEPTSGLDARAAAIVMRTVRNTVDTGRTVVCTIHQPSIDIFDAFDELLLLKRGGEEIYVGPLGRQSSHLIKYFEGIDGVPKIKDGYNPATWMLEITSVAQEGALGNDFTELYKNSELYRRNKALIKELSVPASCSKDLYFPTKYSQSFFTQCMACFWKQHWSYWRNPPYTAVRIMFTFFIALMFGTIFWDLGSRRERQQDLLNAIGSMYIAVLFLGVQNATTVQPVIAIERTVFYRERAAGMYSAMPYAFGQVMIELPYLFLQTIIYGVIVYAMIGFEWTVAKFFWYLFFMYFTLLYFTLYGMMTVAVTPNQSIAAIISSAFYAVWNLFCGFIVPKTRMPVWWRWYYYICPISWTLYGLIASQFGDIQDRLDTNETVEQFIENFFDFKHDFVGYVALILVGISVLFLFIFAFSIKTFNFQKR.

In terms of domain architecture, ABC transporter 1 spans 152 to 425 (LNYLHILPNR…FEYMGFICPE (274 aa)). Residue 185 to 192 (GPPSSGKT) participates in ATP binding. The ABC transmembrane type-2 1 domain occupies 504-716 (LLKACTAREY…AQNAIAVNEF (213 aa)). 7 helical membrane passes run 521-541 (FVYI…MTLF), 554-574 (GAVF…NGFS), 609-629 (IPIT…VIGF), 640-660 (LLLL…MGAL), 664-684 (IIVA…MGGF), 694-714 (WWIW…IAVN), and 753-773 (IGAG…AVAL). A disordered region spans residues 808–830 (LGKSSSEKGNDVRRSASSRSMSS). The span at 812 to 821 (SSEKGNDVRR) shows a compositional bias: basic and acidic residues. The ABC transporter 2 domain occupies 855–1107 (ITFDDIRYAV…HLIKYFEGID (253 aa)). 900–907 (GVSGAGKT) lines the ATP pocket. The ABC transmembrane type-2 2 domain occupies 1180–1394 (TQCMACFWKQ…TLYGLIASQF (215 aa)). Transmembrane regions (helical) follow at residues 1199 to 1219 (YTAV…TIFW), 1239 to 1259 (YIAV…VIAI), 1287 to 1307 (LPYL…MIGF), 1314 to 1334 (FFWY…YGMM), 1344 to 1364 (IAAI…GFIV), 1375 to 1395 (WYYY…SQFG), and 1421 to 1441 (FVGY…FIFA).

The protein belongs to the ABC transporter superfamily. ABCG family. PDR (TC 3.A.1.205) subfamily. As to expression, expressed in root hypodermal passage cells. Expressed in stem tissues, particularly the vasculature and nodes adjacent to leaf axils.

The protein resides in the cell membrane. Its function is as follows. Cellular strigolactone (SL) transporter required for the exudation of SL from the root to the soil. The presence of SL in the vicinity of the roots is required for development of symbiotic interactions with arbuscular mycorrhizal fungi (AMF). Transports SL in the above ground tissues and is required for the control of shoot branching. SL regulates plant shoot architecture by inhibiting the outgrowth of axillary buds. Involved in the regulation of shootward and outward directional strigolactone transport in roots. Due to its polar localization in root cells, mediates directional shootward strigolactone transport, as well as localized outward directional transport for exudation to the soil. This is Pleiotropic drug resistance protein 1 from Petunia hybrida (Petunia).